Reading from the N-terminus, the 848-residue chain is DNA mismatch repair protein MutS (848 aa).

Position 605–612 (605–612 (GPNMAGKS)) interacts with ATP.

Belongs to the DNA mismatch repair MutS family.

This protein is involved in the repair of mismatches in DNA. It is possible that it carries out the mismatch recognition step. This protein has a weak ATPase activity. The chain is DNA mismatch repair protein MutS from Leptospira interrogans serogroup Icterohaemorrhagiae serovar copenhageni (strain Fiocruz L1-130).